Consider the following 257-residue polypeptide: Protein patched homolog 1 (257 aa).

At 1–199 the chain is on the extracellular side; the sequence is AKLQTGTAYL…LDDILKSFSD (199 aa). N75, N114, and N177 each carry an N-linked (GlcNAc...) asparagine glycan. A helical membrane pass occupies residues 200–220; the sequence is ISVIRVASGYLLMLAYACLTM. Positions 201–257 constitute an SSD domain; it reads SVIRVASGYLLMLAYACLTMLRWDCAKSQGAVGLAGVLLVALSVAAGLGLCSLIGIS. Topologically, residues 221–235 are cytoplasmic; that stretch reads LRWDCAKSQGAVGLA. A helical transmembrane segment spans residues 236–256; the sequence is GVLLVALSVAAGLGLCSLIGI.

This sequence belongs to the patched family. In terms of processing, glycosylation is necessary for SHH binding. In terms of tissue distribution, in the eye, detected in neural retina, iris, retinal pigment epithelium, but not in lens.

The protein resides in the membrane. In terms of biological role, acts as a receptor for sonic hedgehog (SHH), indian hedgehog (IHH) and desert hedgehog (DHH). Associates with the smoothened protein (SMO) to transduce the hedgehog's proteins signal. This Cynops pyrrhogaster (Japanese fire-bellied newt) protein is Protein patched homolog 1 (PTC1).